A 201-amino-acid chain; its full sequence is MQYPEAIAKLIESYSKLPGIGRKSATRLAFYTLGMSDDDVKNFARSLSASKSDLTFCRICGFITSKDDDPCVICSDESRDQSKIFVVENSQDEMAIENTHDYHGLYHVLNGVLSPMEGRGPEDINITSLITRLSDHSEVKEVIIGLDASTEGEATTLYLARLIRPSGIKVTRLARGLSVGTNVDYADQLTLTQAVNGRTEI.

Residues 57-74 form a C4-type zinc finger; sequence CRICGFITSKDDDPCVIC. The region spanning 82-178 is the Toprim domain; the sequence is SKIFVVENSQ…KVTRLARGLS (97 aa).

This sequence belongs to the RecR family.

May play a role in DNA repair. It seems to be involved in an RecBC-independent recombinational process of DNA repair. It may act with RecF and RecO. This is Recombination protein RecR from Oenococcus oeni (strain ATCC BAA-331 / PSU-1).